The sequence spans 286 residues: Shikimate dehydrogenase (NADP(+)) (286 aa).

Residues 20–22 (SLS) and Thr67 contribute to the shikimate site. Residue Lys71 is the Proton acceptor of the active site. Residues Asn92 and Asp107 each coordinate shikimate. Residues 132-136 (GAGGA) and Met228 contribute to the NADP(+) site. Shikimate is bound at residue Tyr230. Residue Gly251 coordinates NADP(+).

It belongs to the shikimate dehydrogenase family. Homodimer.

The enzyme catalyses shikimate + NADP(+) = 3-dehydroshikimate + NADPH + H(+). Its pathway is metabolic intermediate biosynthesis; chorismate biosynthesis; chorismate from D-erythrose 4-phosphate and phosphoenolpyruvate: step 4/7. Involved in the biosynthesis of the chorismate, which leads to the biosynthesis of aromatic amino acids. Catalyzes the reversible NADPH linked reduction of 3-dehydroshikimate (DHSA) to yield shikimate (SA). This chain is Shikimate dehydrogenase (NADP(+)), found in Geobacter sulfurreducens (strain ATCC 51573 / DSM 12127 / PCA).